Reading from the N-terminus, the 504-residue chain is Putative arrestin-related trafficking adapter SPBC839.02 (504 aa).

The disordered stretch occupies residues 481 to 504; that stretch reads QAPPPKYDDIFQSGSSHDENHDDN.

This sequence belongs to the ALY1 family.

In terms of biological role, may regulate endocytosis in response to extracellular stimuli. This chain is Putative arrestin-related trafficking adapter SPBC839.02, found in Schizosaccharomyces pombe (strain 972 / ATCC 24843) (Fission yeast).